Here is a 172-residue protein sequence, read N- to C-terminus: Adenine phosphoribosyltransferase (172 aa).

The protein belongs to the purine/pyrimidine phosphoribosyltransferase family. Homodimer.

It localises to the cytoplasm. It carries out the reaction AMP + diphosphate = 5-phospho-alpha-D-ribose 1-diphosphate + adenine. Its pathway is purine metabolism; AMP biosynthesis via salvage pathway; AMP from adenine: step 1/1. In terms of biological role, catalyzes a salvage reaction resulting in the formation of AMP, that is energically less costly than de novo synthesis. In Herpetosiphon aurantiacus (strain ATCC 23779 / DSM 785 / 114-95), this protein is Adenine phosphoribosyltransferase.